Consider the following 572-residue polypeptide: Linalool synthase TPS2, chloroplastic (572 aa).

A chloroplast-targeting transit peptide spans 1–27 (EVEEPKTKISASTAEASSSRISSAKMT). A disordered region spans residues 1–45 (EVEEPKTKISASTAEASSSRISSAKMTADGTIKLGDQSPLKQSEK). Residues 8-28 (KISASTAEASSSRISSAKMTA) show a composition bias toward low complexity. The (2E)-geranyl diphosphate site is built by Arg-284, Asp-321, Asp-325, Arg-462, and Asn-465. Asp-321 and Asp-325 together coordinate Mg(2+). The DDXXD motif motif lies at 321-325 (DDVYD). Mg(2+) contacts are provided by Asn-465, Thr-469, and Ser-473.

It belongs to the terpene synthase family. Tpsb subfamily. As to quaternary structure, monomer. Mg(2+) serves as cofactor. It depends on Mn(2+) as a cofactor. In terms of tissue distribution, expressed in flowers and fruits.

Its subcellular location is the plastid. It localises to the chloroplast. It catalyses the reaction (2E)-geranyl diphosphate = beta-myrcene + diphosphate. The catalysed reaction is (2E)-geranyl diphosphate + H2O = linalool + diphosphate. It carries out the reaction (2E)-geranyl diphosphate = (Z)-beta-ocimene + diphosphate. The enzyme catalyses (2E)-geranyl diphosphate = (E)-beta-ocimene + diphosphate. Its pathway is secondary metabolite biosynthesis; terpenoid biosynthesis. Monoterpene synthase (mono-TPS) involved in the biosynthesis of monoterpenes natural products, constituent of coffee beverage aroma. Catalyzes the conversion of (2E)-geranyl diphosphate (GPP) into linalool and beta-myrcene, and, as minor products, cis-ocimene and trans-ocimene. Not able to use geranylgeranyl pyrophosphate (GGPP) and farnesyl pyrophosphate (FPP) as substrates. The chain is Linalool synthase TPS2, chloroplastic from Coffea arabica (Arabian coffee).